Here is a 266-residue protein sequence, read N- to C-terminus: UPF0354 protein Lm4b_01619 (266 aa).

The protein belongs to the UPF0354 family.

The protein is UPF0354 protein Lm4b_01619 of Listeria monocytogenes serotype 4b (strain CLIP80459).